Consider the following 163-residue polypeptide: ATP synthase subunit delta, mitochondrial (163 aa).

A mitochondrion-targeting transit peptide spans 1–18; it reads MLARTIQRFSVVAKRGYA.

It belongs to the ATPase epsilon chain family. In terms of assembly, subunit of the F-type ATPase which has 2 components, CF(1) - the catalytic core - and CF(0) - the membrane proton channel.

The protein localises to the mitochondrion. It is found in the mitochondrion inner membrane. Its function is as follows. Mitochondrial membrane ATP synthase (F(1)F(0) ATP synthase or Complex V) produces ATP from ADP in the presence of a proton gradient across the membrane which is generated by electron transport complexes of the respiratory chain. F-type ATPases consist of two structural domains, F(1) - containing the extramembraneous catalytic core, and F(0) - containing the membrane proton channel, linked together by a central stalk and a peripheral stalk. During catalysis, ATP turnover in the catalytic domain of F(1) is coupled via a rotary mechanism of the central stalk subunits to proton translocation. Part of the complex F(1) domain and of the central stalk which is part of the complex rotary element. The protein is ATP synthase subunit delta, mitochondrial of Caenorhabditis elegans.